The sequence spans 1383 residues: DNA-directed RNA polymerase subunit beta (1383 aa).

It belongs to the RNA polymerase beta chain family. In terms of assembly, the RNAP catalytic core consists of 2 alpha, 1 beta, 1 beta' and 1 omega subunit. When a sigma factor is associated with the core the holoenzyme is formed, which can initiate transcription.

The enzyme catalyses RNA(n) + a ribonucleoside 5'-triphosphate = RNA(n+1) + diphosphate. In terms of biological role, DNA-dependent RNA polymerase catalyzes the transcription of DNA into RNA using the four ribonucleoside triphosphates as substrates. This chain is DNA-directed RNA polymerase subunit beta, found in Xanthomonas oryzae pv. oryzae (strain MAFF 311018).